Here is a 168-residue protein sequence, read N- to C-terminus: S-ribosylhomocysteine lyase (168 aa).

Fe cation-binding residues include His54, His58, and Cys128.

It belongs to the LuxS family. As to quaternary structure, homodimer. Fe cation serves as cofactor.

The catalysed reaction is S-(5-deoxy-D-ribos-5-yl)-L-homocysteine = (S)-4,5-dihydroxypentane-2,3-dione + L-homocysteine. Involved in the synthesis of autoinducer 2 (AI-2) which is secreted by bacteria and is used to communicate both the cell density and the metabolic potential of the environment. The regulation of gene expression in response to changes in cell density is called quorum sensing. Catalyzes the transformation of S-ribosylhomocysteine (RHC) to homocysteine (HC) and 4,5-dihydroxy-2,3-pentadione (DPD). In Neisseria meningitidis serogroup A / serotype 4A (strain DSM 15465 / Z2491), this protein is S-ribosylhomocysteine lyase.